Here is a 223-residue protein sequence, read N- to C-terminus: DNA mismatch repair protein MutH (223 aa).

The protein belongs to the MutH family.

The protein resides in the cytoplasm. Sequence-specific endonuclease that cleaves unmethylated GATC sequences. It is involved in DNA mismatch repair. The chain is DNA mismatch repair protein MutH from Shewanella sp. (strain MR-4).